A 576-amino-acid chain; its full sequence is 2-isopropylmalate synthase (576 aa).

The Pyruvate carboxyltransferase domain maps to Pro-31–Asn-305. Mg(2+) is bound by residues Asp-40, His-244, His-246, and Asn-280. Residues Ala-437–Ala-576 are regulatory domain.

This sequence belongs to the alpha-IPM synthase/homocitrate synthase family. LeuA type 2 subfamily. In terms of assembly, homodimer. It depends on Mg(2+) as a cofactor.

It localises to the cytoplasm. The catalysed reaction is 3-methyl-2-oxobutanoate + acetyl-CoA + H2O = (2S)-2-isopropylmalate + CoA + H(+). It functions in the pathway amino-acid biosynthesis; L-leucine biosynthesis; L-leucine from 3-methyl-2-oxobutanoate: step 1/4. Functionally, catalyzes the condensation of the acetyl group of acetyl-CoA with 3-methyl-2-oxobutanoate (2-ketoisovalerate) to form 3-carboxy-3-hydroxy-4-methylpentanoate (2-isopropylmalate). The sequence is that of 2-isopropylmalate synthase from Ralstonia nicotianae (strain ATCC BAA-1114 / GMI1000) (Ralstonia solanacearum).